The chain runs to 650 residues: Chaperone protein DnaK (650 aa).

At threonine 200 the chain carries Phosphothreonine; by autocatalysis. Positions 611–636 (AQQAGAAGAAGAAEGAAHAGGAQQAA) are enriched in low complexity. The tract at residues 611 to 637 (AQQAGAAGAAGAAEGAAHAGGAQQAAD) is disordered.

Belongs to the heat shock protein 70 family.

Acts as a chaperone. This is Chaperone protein DnaK from Burkholderia ambifaria (strain MC40-6).